Here is a 303-residue protein sequence, read N- to C-terminus: Glutamyl-Q tRNA(Asp) synthetase (303 aa).

L-glutamate-binding positions include 16-20 and E52; that span reads RFAPS. The 'HIGH' region signature appears at 19–29; it reads PSPSGPLHFGS. Zn(2+)-binding residues include C108, C110, Y122, and C126. Y177 and R195 together coordinate L-glutamate. A 'KMSKS' region motif is present at residues 233 to 237; the sequence is KLSKQ. K236 is an ATP binding site.

The protein belongs to the class-I aminoacyl-tRNA synthetase family. GluQ subfamily. The cofactor is Zn(2+).

Its function is as follows. Catalyzes the tRNA-independent activation of glutamate in presence of ATP and the subsequent transfer of glutamate onto a tRNA(Asp). Glutamate is transferred on the 2-amino-5-(4,5-dihydroxy-2-cyclopenten-1-yl) moiety of the queuosine in the wobble position of the QUC anticodon. This chain is Glutamyl-Q tRNA(Asp) synthetase, found in Vibrio vulnificus (strain YJ016).